Consider the following 230-residue polypeptide: uncharacterized protein (230 aa).

Transmembrane regions (helical) follow at residues 34–54 (FFAG…MNFQ), 56–76 (VVQY…GLMF), 87–107 (MLFA…GMVI), 111–131 (GLGA…LMSV), 146–166 (MLFI…FLGS), 167–187 (PMFQ…YIAY), and 205–225 (VSLY…IGIF).

It belongs to the BI1 family.

It localises to the cell membrane. This is an uncharacterized protein from Helicobacter pylori (strain ATCC 700392 / 26695) (Campylobacter pylori).